The chain runs to 644 residues: Macrolide export ATP-binding/permease protein MacB (644 aa).

One can recognise an ABC transporter domain in the interval 6–244 (LELDGVWRRF…SQATEAQPDG (239 aa)). 42-49 (GASGSGKS) provides a ligand contact to ATP. Transmembrane regions (helical) follow at residues 271–291 (ALTM…IAIG), 415–435 (EAVG…GVVA), 517–537 (LSLL…IGVM), 574–594 (LVCL…SFVF), and 609–629 (VIAL…FLPA).

Belongs to the ABC transporter superfamily. Macrolide exporter (TC 3.A.1.122) family. Homodimer.

Its subcellular location is the cell inner membrane. Its function is as follows. Non-canonical ABC transporter that contains transmembrane domains (TMD), which form a pore in the inner membrane, and an ATP-binding domain (NBD), which is responsible for energy generation. Confers resistance against macrolides. This is Macrolide export ATP-binding/permease protein MacB from Chromobacterium violaceum (strain ATCC 12472 / DSM 30191 / JCM 1249 / CCUG 213 / NBRC 12614 / NCIMB 9131 / NCTC 9757 / MK).